Consider the following 131-residue polypeptide: Probable calcium-binding protein CML34 (131 aa).

4 EF-hand domains span residues 1–33, 34–69, 70–97, and 98–131; these read MSAK…FSPY, FTQE…MLKE, VFVF…LGKK, and FTEE…IGDI. Asp-11, Asn-13, Asp-15, Lys-17, Glu-22, Asp-47, Asp-49, Asn-51, Glu-53, and Glu-58 together coordinate Ca(2+). 5 residues coordinate Ca(2+): Asp-111, Asp-113, Asp-115, Tyr-117, and Glu-122.

Its function is as follows. Potential calcium sensor. The protein is Probable calcium-binding protein CML34 (CML34) of Arabidopsis thaliana (Mouse-ear cress).